The sequence spans 352 residues: SNF1-related protein kinase regulatory subunit gamma-like PV42a (352 aa).

CBS domains follow at residues 24–106 (RNRR…LSDL), 122–196 (LEGL…FDDL), 210–281 (VNDS…ELQT), and 297–352 (KERE…STLS).

The protein belongs to the 5'-AMP-activated protein kinase gamma subunit family. In terms of tissue distribution, expressed highly in rosette leaves, cauline leaves, open flowers, developing siliques and dry seeds, but at a low level in stems and floral buds.

In terms of biological role, plays redundant role with PV42b in regulating male gametogenesis and pollen tube guidance. This is SNF1-related protein kinase regulatory subunit gamma-like PV42a (PV42A) from Arabidopsis thaliana (Mouse-ear cress).